An 879-amino-acid polypeptide reads, in one-letter code: Leucine--tRNA ligase (879 aa).

The short motif at 43 to 53 is the 'HIGH' region element; it reads PYPSGRIHMGH. A 'KMSKS' region motif is present at residues 636–640; it reads KMSKS. Lys639 lines the ATP pocket.

The protein belongs to the class-I aminoacyl-tRNA synthetase family.

The protein resides in the cytoplasm. It carries out the reaction tRNA(Leu) + L-leucine + ATP = L-leucyl-tRNA(Leu) + AMP + diphosphate. The polypeptide is Leucine--tRNA ligase (Afipia carboxidovorans (strain ATCC 49405 / DSM 1227 / KCTC 32145 / OM5) (Oligotropha carboxidovorans)).